The following is a 108-amino-acid chain: Thiosulfate sulfurtransferase GlpE (108 aa).

Residues 17–105 (QEKEAVLVDI…WQRQFPAEVA (89 aa)) enclose the Rhodanese domain. Residue Cys-65 is the Cysteine persulfide intermediate of the active site.

The protein belongs to the GlpE family.

It localises to the cytoplasm. It carries out the reaction thiosulfate + hydrogen cyanide = thiocyanate + sulfite + 2 H(+). The catalysed reaction is thiosulfate + [thioredoxin]-dithiol = [thioredoxin]-disulfide + hydrogen sulfide + sulfite + 2 H(+). In terms of biological role, transferase that catalyzes the transfer of sulfur from thiosulfate to thiophilic acceptors such as cyanide or dithiols. May function in a CysM-independent thiosulfate assimilation pathway by catalyzing the conversion of thiosulfate to sulfite, which can then be used for L-cysteine biosynthesis. The protein is Thiosulfate sulfurtransferase GlpE of Escherichia coli O8 (strain IAI1).